Here is a 901-residue protein sequence, read N- to C-terminus: MLIKLLTKVFGSRNDRTLRRMRKVVNIINAMEPEMEKLSDEELKGKTAEFRVRLEKGEVLENLIPEAFAVVREASKRVFGMRHFDVQLLGGMVLNERCIAEMRTGEGKTLTATLPAYLNALTGKGVHVVTVNDYLAQRDAENNRPLFEFLGLTVGINLPGMPAPAKREAYAADITYGTNNEYGFDYLRDNMAFSPEERVQRKLHYALVDEVDSILIDEARTPLIISGPAEDSSEMYKRVNKIIPHLIRQEKEDSETFQGEGHFSVDEKSRQVNLTERGLVLIEELLVKEGIMDEGESLYSPANIMLMHHVTAALRAHALFTRDVDYIVKDGEVIIVDEHTGRTMQGRRWSDGLHQAVEAKEGVQIQNENQTLASITFQNYFRLYEKLAGMTGTADTEAFEFSSIYKLDTVVVPTNRPMIRKDLPDLVYMTEAEKIQAIIEDIKERTAKGQPVLVGTISIEKSELVSNELTKAGIKHNVLNAKFHANEAAIVAQAGYPAAVTIATNMAGRGTDIVLGGSWQAEVAALENPTAEQIEKIKADWQVRHDAVLAAGGLHIIGTERHESRRIDNQLRGRSGRQGDAGSSRFYLSMEDALMRIFASDRVSGMMRKLGMKPGEAIEHPWVTKAIANAQRKVESRNFDIRKQLLEYDDVANDQRRAIYSQRNELLDVSDVSETINSIREDVFKATIDAYIPPQSLEEMWDIPGLQERLKNDFDLDLPIAEWLDKEPELHEETLRERILAQSIEVYQRKEEVVGAEMMRHFEKGVMLQTLDSLWKEHLAAMDYLRQGIHLRGYAQKDPKQEYKRESFSMFAAMLESLKYEVISTLSKVQVRMPEEVEELEQQRRMEAERLAQMQQLSHQDDDSAAAAALAAQTGERKVGRNDPCPCGSGKKYKQCHGRLQ.

ATP contacts are provided by residues Q87, 105-109 (GEGKT), and D512. Residues 859-901 (HQDDDSAAAAALAAQTGERKVGRNDPCPCGSGKKYKQCHGRLQ) are disordered. Residues C885, C887, C896, and H897 each coordinate Zn(2+). Over residues 891-901 (KKYKQCHGRLQ) the composition is skewed to basic residues.

It belongs to the SecA family. Monomer and homodimer. Part of the essential Sec protein translocation apparatus which comprises SecA, SecYEG and auxiliary proteins SecDF-YajC and YidC. The cofactor is Zn(2+).

It is found in the cell inner membrane. The protein localises to the cytoplasm. The catalysed reaction is ATP + H2O + cellular proteinSide 1 = ADP + phosphate + cellular proteinSide 2.. In terms of biological role, part of the Sec protein translocase complex. Interacts with the SecYEG preprotein conducting channel. Has a central role in coupling the hydrolysis of ATP to the transfer of proteins into and across the cell membrane, serving both as a receptor for the preprotein-SecB complex and as an ATP-driven molecular motor driving the stepwise translocation of polypeptide chains across the membrane. In Escherichia coli O6:K15:H31 (strain 536 / UPEC), this protein is Protein translocase subunit SecA.